The primary structure comprises 494 residues: Probable capsid protein (494 aa).

Residues 120-123 (RPKR) carry the Nuclear localization signal motif. A CCHC-type zinc finger spans residues 418–435 (CRCWVCNIEGHYANECPN). Residues 474 to 494 (LSSSDSELDDTCEESSSEESE) form a disordered region. Residues 479–494 (SELDDTCEESSSEESE) are compositionally biased toward acidic residues.

Belongs to the caulimoviridae capsid protein family. Interacts (via nuclear localization signal) with host importin alpha.

Its subcellular location is the virion. The protein localises to the host nucleus. Its function is as follows. Self assembles to form an icosahedral capsid, about 50 nm in diameter, nm, composed of 420 subunits of the viral capsid protein. The capsid encapsulates the genomic dsDNA. Following virus entry into host cell, provides nuclear import of the viral genome. Virus particles do not enter the nucleus, but dock at the nuclear membrane through the interaction with host importins. This chain is Probable capsid protein, found in Dianthus caryophyllus (Carnation).